Here is a 291-residue protein sequence, read N- to C-terminus: MAKGRVAERSQMGADHTTPVGDGAAGTRGPAAPGSRDYQKEKSWAEAGSARMSLLILVSIFLSAAFVMFLVYKNFPQLSEEERVNMKVPRDMDDAKALGKVLSKYKDTFYVQVLVAYFATYIFLQTFAIPGSIFLSILSGFLYPFPLALFLVCLCSGLGASFCYMLSYLVGRPVVYKYLTEKAVKWSQQVERHREHLINYIIFLRITPFLPNWFINITSPVINVPLKVFFIGTFLGVAPPSFVAIKAGTTLHQPTTAGEAVSWNSIFILMILAVLSILPAIFQKKLKQKFE.

Positions 1 to 38 are disordered; sequence MAKGRVAERSQMGADHTTPVGDGAAGTRGPAAPGSRDY. T18 bears the Phosphothreonine mark. A compositionally biased stretch (low complexity) spans 21–34; sequence GDGAAGTRGPAAPG. S35 is subject to Phosphoserine. The next 6 helical transmembrane spans lie at 52 to 72, 109 to 129, 147 to 169, 197 to 217, 225 to 245, and 262 to 282; these read MSLL…FLVY, FYVQ…TFAI, LALF…LSYL, LINY…FINI, PLKV…FVAI, and SWNS…PAIF. Residues 140-251 are VTT domain; required for its function in autophagy; sequence GFLYPFPLAL…FVAIKAGTTL (112 aa).

The protein belongs to the TMEM41 family. As to quaternary structure, interacts with VMP1. Interacts with COPA, COPB1, VDAC1 and ERLIN2. Interacts with ATG2A. Interacts with SURF4.

Its subcellular location is the endoplasmic reticulum membrane. The protein resides in the endomembrane system. It carries out the reaction a 1,2-diacyl-sn-glycero-3-phospho-L-serine(in) = a 1,2-diacyl-sn-glycero-3-phospho-L-serine(out). The enzyme catalyses cholesterol(in) = cholesterol(out). It catalyses the reaction a 1,2-diacyl-sn-glycero-3-phosphocholine(in) = a 1,2-diacyl-sn-glycero-3-phosphocholine(out). The catalysed reaction is a 1,2-diacyl-sn-glycero-3-phosphoethanolamine(in) = a 1,2-diacyl-sn-glycero-3-phosphoethanolamine(out). Functionally, phospholipid scramblase involved in lipid homeostasis and membrane dynamics processes. Has phospholipid scramblase activity toward cholesterol and phosphatidylserine, as well as phosphatidylethanolamine and phosphatidylcholine. Required for autophagosome formation: participates in early stages of autophagosome biogenesis at the endoplasmic reticulum (ER) membrane by reequilibrating the leaflets of the ER as lipids are extracted by ATG2 (ATG2A or ATG2B) to mediate autophagosome assembly. In addition to autophagy, involved in other processes in which phospholipid scramblase activity is required. Required for normal motor neuron development. The chain is Transmembrane protein 41B from Pongo abelii (Sumatran orangutan).